A 316-amino-acid polypeptide reads, in one-letter code: Tyrosine recombinase XerC (316 aa).

The 87-residue stretch at 11–97 folds into the Core-binding (CB) domain; it reads SGLRKPLDQF…SLRSFFDFLI (87 aa). The 181-residue stretch at 118–298 folds into the Tyr recombinase domain; sequence PLPKNLDVDE…DFQHLADVYD (181 aa). Catalysis depends on residues Arg157, Lys181, His250, Arg253, and His276. The O-(3'-phospho-DNA)-tyrosine intermediate role is filled by Tyr285.

The protein belongs to the 'phage' integrase family. XerC subfamily. As to quaternary structure, forms a cyclic heterotetrameric complex composed of two molecules of XerC and two molecules of XerD.

It is found in the cytoplasm. Functionally, site-specific tyrosine recombinase, which acts by catalyzing the cutting and rejoining of the recombining DNA molecules. The XerC-XerD complex is essential to convert dimers of the bacterial chromosome into monomers to permit their segregation at cell division. It also contributes to the segregational stability of plasmids. This is Tyrosine recombinase XerC from Vibrio vulnificus (strain CMCP6).